The sequence spans 392 residues: GDP-mannose transporter (392 aa).

The segment covering 1 to 11 has biased composition (basic and acidic residues); the sequence is MDDKKNEDLEM. The interval 1–25 is disordered; it reads MDDKKNEDLEMRNFNGRSSPSQRDP. At 1 to 45 the chain is on the cytoplasmic side; the sequence is MDDKKNEDLEMRNFNGRSSPSQRDPFLAKPGAAAKRGNSAFDLSN. The helical transmembrane segment at 46 to 66 threads the bilayer; the sequence is VTNSPGISILAYCLASISMTV. At 67–76 the chain is on the lumenal side; that stretch reads TNKYCVSGSN. The helical transmembrane segment at 77-97 threads the bilayer; sequence WNLNFFYLAIQSVVCIIAIII. Residues 98–116 are Cytoplasmic-facing; it reads CKQAGLITNLAPFDTKKAK. Residues 117 to 139 traverse the membrane as a helical segment; it reads TWFPISLLLVGMIYTSTKALQFL. The Lumenal segment spans residues 140-142; sequence SVP. The chain crosses the membrane as a helical span at residues 143–165; that stretch reads VYTIFKNLTIIVIAYGEVLWFGG. Over 166-171 the chain is Cytoplasmic; it reads SVTPSA. Residues 172 to 191 form a helical membrane-spanning segment; it reads LFSFGLMVLSSVVAAWADIQ. Residues 192–210 lie on the Lumenal side of the membrane; the sequence is HALYGGGAAQSAEAAAALS. Residues 211-231 form a helical membrane-spanning segment; sequence TLNAGYAWMGMNVFCTAAYVL. At 232-246 the chain is on the cytoplasmic side; that stretch reads SMRKVIKKMNFKDWD. The chain crosses the membrane as a helical span at residues 247 to 267; sequence TMFYNNLLTIPVLFVCSFIFE. N-linked (GlcNAc...) asparagine glycans are attached at residues asparagine 268 and asparagine 273. At 268–285 the chain is on the lumenal side; it reads NWSSENLTKNFPLETRNN. The helical transmembrane segment at 286–306 threads the bilayer; it reads LILGMIYSGLATIFISYCSAW. At 307 to 314 the chain is on the cytoplasmic side; sequence CIRVTSST. Residues 315 to 337 form a helical membrane-spanning segment; the sequence is TYSMVGALNKLPIAVSGLVFFAA. The Lumenal portion of the chain corresponds to 338 to 340; that stretch reads PVT. Residues 341 to 360 form a helical membrane-spanning segment; the sequence is FGSVSAIFIGFVSGIVYAWA. The Cytoplasmic portion of the chain corresponds to 361–392; the sequence is KVRQNQSKGNILPTTQPVMSASSQSNRDAAKA. A disordered region spans residues 373–392; the sequence is PTTQPVMSASSQSNRDAAKA.

The protein belongs to the TPT transporter family. SLC35D subfamily. Homooligomer.

The protein localises to the golgi apparatus membrane. Its subcellular location is the cytoplasmic vesicle membrane. It is found in the endoplasmic reticulum membrane. In terms of biological role, involved in the import of GDP-mannose from the cytoplasm into the Golgi lumen. The polypeptide is GDP-mannose transporter (gmt1) (Botryotinia fuckeliana (strain B05.10) (Noble rot fungus)).